Reading from the N-terminus, the 213-residue chain is Large ribosomal subunit protein uL3 (213 aa).

The interval 130–161 is disordered; sequence KRGNMTHGSKNHRLPGSTGAGTTPGRVYPGKR.

Belongs to the universal ribosomal protein uL3 family. In terms of assembly, part of the 50S ribosomal subunit. Forms a cluster with proteins L14 and L19.

Functionally, one of the primary rRNA binding proteins, it binds directly near the 3'-end of the 23S rRNA, where it nucleates assembly of the 50S subunit. The sequence is that of Large ribosomal subunit protein uL3 from Picosynechococcus sp. (strain ATCC 27264 / PCC 7002 / PR-6) (Agmenellum quadruplicatum).